Here is a 95-residue protein sequence, read N- to C-terminus: Protein TusB (95 aa).

It belongs to the DsrH/TusB family. As to quaternary structure, heterohexamer, formed by a dimer of trimers. The hexameric TusBCD complex contains 2 copies each of TusB, TusC and TusD. The TusBCD complex interacts with TusE.

It localises to the cytoplasm. Part of a sulfur-relay system required for 2-thiolation of 5-methylaminomethyl-2-thiouridine (mnm(5)s(2)U) at tRNA wobble positions. The sequence is that of Protein TusB from Pectobacterium atrosepticum (strain SCRI 1043 / ATCC BAA-672) (Erwinia carotovora subsp. atroseptica).